The chain runs to 983 residues: Glycine dehydrogenase (decarboxylating) (983 aa).

Lysine 726 is modified (N6-(pyridoxal phosphate)lysine).

The protein belongs to the GcvP family. The glycine cleavage system is composed of four proteins: P, T, L and H. Pyridoxal 5'-phosphate is required as a cofactor.

It carries out the reaction N(6)-[(R)-lipoyl]-L-lysyl-[glycine-cleavage complex H protein] + glycine + H(+) = N(6)-[(R)-S(8)-aminomethyldihydrolipoyl]-L-lysyl-[glycine-cleavage complex H protein] + CO2. Functionally, the glycine cleavage system catalyzes the degradation of glycine. The P protein binds the alpha-amino group of glycine through its pyridoxal phosphate cofactor; CO(2) is released and the remaining methylamine moiety is then transferred to the lipoamide cofactor of the H protein. The chain is Glycine dehydrogenase (decarboxylating) from Synechocystis sp. (strain ATCC 27184 / PCC 6803 / Kazusa).